The following is a 316-amino-acid chain: MEPVHYSVQGNNILQIFTENFHKEDPVLFLDGTAGEGGHSLLFLKGFPNSKVILCDRDPVMLSRALARLVDFKERVVSIQTNFSEIDSNLLSSHGINDSPQGILLDLGISTFHLFHSGRGFSFKEAEPLDMRLTPNIGINAEDVINTYSKDRLMHIFYTYGEERWSKKIAEVIVERRKQNLISYTSELADLISKIIPRKLWPPGRHPATRIFQALRIEVNQELTHIEKGLDSLLNLLRPEGVIQVISFHSLEDRIVKNSLRNYAKQNGFELLTKKPILPSEEETKENPASRSAKLRVLRKTKSADKKYKKENSKEE.

Residues glycine 37 to histidine 39, aspartate 56, phenylalanine 83, aspartate 106, and histidine 113 contribute to the S-adenosyl-L-methionine site. The interval proline 276–glutamate 316 is disordered. Over residues lysine 302–glutamate 316 the composition is skewed to basic and acidic residues.

It belongs to the methyltransferase superfamily. RsmH family.

The protein localises to the cytoplasm. It catalyses the reaction cytidine(1402) in 16S rRNA + S-adenosyl-L-methionine = N(4)-methylcytidine(1402) in 16S rRNA + S-adenosyl-L-homocysteine + H(+). Specifically methylates the N4 position of cytidine in position 1402 (C1402) of 16S rRNA. The polypeptide is Ribosomal RNA small subunit methyltransferase H (Leptospira borgpetersenii serovar Hardjo-bovis (strain L550)).